Consider the following 243-residue polypeptide: MPCNRSRPSLYSLSYIKRGKTRNYLYPFWSPFAYYLYCYKYRITLREKMLPCCYKSITYKEQEDLTLRPHCCLPCSCLPCSCLQCSESLGGLQVGRSTAQEKDHSQLKELYSAGNLTVLSTDPLLHQDPVQLDFHFRLTPHSSAHWHGLLCDHRLFLDIPYQALDQGNRESLTATLEYVEEKTNVDSVFVNFQIDRKDRGALLRAFSYMGFEVVRPDHPALPPWDNVIFMVYPLERDLGHPGQ.

Phosphoserine occurs at positions 6, 9, and 12.

It belongs to the ODC antizyme family. Interacts with ODC1 and thereby sterically blocks ODC homodimerization. Interacts with AZIN2; this interaction disrupts the interaction between the antizyme and ODC1. Interacts with GGN. As to expression, testis specific. Expressed throughout the differentiation process from spermatids to spermatozoa in the inner part of the seminiferous tubules.

It is found in the nucleus. The protein resides in the cytoplasm. Ornithine decarboxylase (ODC) antizyme protein that negatively regulates ODC activity and intracellular polyamine biosynthesis and uptake in response to increased intracellular polyamine levels. Binds to ODC monomers, inhibiting the assembly of the functional ODC homodimers. Does not target the ODC monomers for degradation, which allows a protein synthesis-independent restoration of ODC activity. Stabilizes AZIN2 by interfering with its ubiquitination. Involved in the translocation of AZNI2 from ER-Golgi intermediate compartment (ERGIC) to the cytosol. Probably plays a key role in spermatogenesis by regulating the intracellular concentration of polyamines in haploid germ cells. This Mus musculus (Mouse) protein is Ornithine decarboxylase antizyme 3 (Oaz3).